Consider the following 463-residue polypeptide: 23S rRNA (uracil(1939)-C(5))-methyltransferase RlmD (463 aa).

One can recognise a TRAM domain in the interval 14–78 (AVAPGSDPVV…PSYEQAHLLE (65 aa)). [4Fe-4S] cluster contacts are provided by Cys91, Cys97, Cys100, and Cys179. Positions 287, 316, 321, 337, 365, and 386 each coordinate S-adenosyl-L-methionine. The Nucleophile role is filled by Cys419.

Belongs to the class I-like SAM-binding methyltransferase superfamily. RNA M5U methyltransferase family. RlmD subfamily.

The enzyme catalyses uridine(1939) in 23S rRNA + S-adenosyl-L-methionine = 5-methyluridine(1939) in 23S rRNA + S-adenosyl-L-homocysteine + H(+). Catalyzes the formation of 5-methyl-uridine at position 1939 (m5U1939) in 23S rRNA. The sequence is that of 23S rRNA (uracil(1939)-C(5))-methyltransferase RlmD from Cupriavidus pinatubonensis (strain JMP 134 / LMG 1197) (Cupriavidus necator (strain JMP 134)).